A 400-amino-acid polypeptide reads, in one-letter code: Deoxyguanosinetriphosphate triphosphohydrolase-like protein (400 aa).

In terms of domain architecture, HD spans 73–215 (RLTHSIEVSQ…AAIADDIAYN (143 aa)).

Belongs to the dGTPase family. Type 2 subfamily.

The protein is Deoxyguanosinetriphosphate triphosphohydrolase-like protein of Bartonella quintana (strain Toulouse) (Rochalimaea quintana).